The chain runs to 351 residues: Leukotriene B4 receptor 1 (351 aa).

Residues 1-21 (MAANTTSTAATSSPGGMSLSL) lie on the Extracellular side of the membrane. N-linked (GlcNAc...) asparagine glycosylation occurs at N4. Residues 22–44 (LPIVLLSVALVVGLPGNSFVVWS) traverse the membrane as a helical segment. At 45–56 (ILKRMQKRSVTA) the chain is on the cytoplasmic side. A helical membrane pass occupies residues 57–77 (LLVLNLALADLAVLLTAPFFL). Residues 78–93 (HFLARGTWSFEVTGCR) are Extracellular-facing. A helical membrane pass occupies residues 94–115 (LCHYVCGVSMYASVLLITIMSL). Over 116–140 (DRSLAVARPFVSQKVRTKAFARWVL) the chain is Cytoplasmic. A helical membrane pass occupies residues 141–161 (AGIWVVSFLLAIPVLVYRTVT). Topologically, residues 162–179 (PKNKTLICDSRYPSDGHK) are extracellular. A glycan (N-linked (GlcNAc...) asparagine) is linked at N164. The chain crosses the membrane as a helical span at residues 180-200 (VFHLLFEAITGFLLPFLAVVA). Residues 201–222 (SYSDIGRRLQARRFRRSRRTGR) are Cytoplasmic-facing. A helical membrane pass occupies residues 223–243 (LVVLIILAFAAFWLPYHLVNL). The Extracellular portion of the chain corresponds to 244–268 (VEAGRTLAGWDKNSPAGQRLKLARY). Residues 269–289 (VLIALAFLSSSVNPVLYACAG) form a helical membrane-spanning segment. Topologically, residues 290–351 (GGLLRSAGVG…TSSTPPESSK (62 aa)) are cytoplasmic. Polar residues-rich tracts occupy residues 311–327 (EVSS…TPKA) and 339–351 (SFMT…ESSK). A disordered region spans residues 311–351 (EVSSTRRGGTLVQTPKATPTCPEPGPTDSFMTSSTPPESSK).

Belongs to the G-protein coupled receptor 1 family. In terms of processing, phosphorylated by GRK6 upon leukotriene B4 binding; which promotes desensitization. In terms of tissue distribution, exclusively expressed in polymorphonuclear leukocytes.

It localises to the cell membrane. Functionally, receptor for leukotriene B4, a potent chemoattractant involved in inflammation and immune response. This is Leukotriene B4 receptor 1 (Ltb4r) from Rattus norvegicus (Rat).